The chain runs to 182 residues: ATP synthase subunit delta (182 aa).

The protein belongs to the ATPase delta chain family. F-type ATPases have 2 components, F(1) - the catalytic core - and F(0) - the membrane proton channel. F(1) has five subunits: alpha(3), beta(3), gamma(1), delta(1), epsilon(1). F(0) has three main subunits: a(1), b(2) and c(10-14). The alpha and beta chains form an alternating ring which encloses part of the gamma chain. F(1) is attached to F(0) by a central stalk formed by the gamma and epsilon chains, while a peripheral stalk is formed by the delta and b chains.

It localises to the cell membrane. With respect to regulation, increases 2-fold following exposure to low pH. F(1)F(0) ATP synthase produces ATP from ADP in the presence of a proton or sodium gradient. F-type ATPases consist of two structural domains, F(1) containing the extramembraneous catalytic core and F(0) containing the membrane proton channel, linked together by a central stalk and a peripheral stalk. During catalysis, ATP synthesis in the catalytic domain of F(1) is coupled via a rotary mechanism of the central stalk subunits to proton translocation. In terms of biological role, this protein is part of the stalk that links CF(0) to CF(1). It either transmits conformational changes from CF(0) to CF(1) or is implicated in proton conduction. The chain is ATP synthase subunit delta from Lactobacillus acidophilus (strain ATCC 700396 / NCK56 / N2 / NCFM).